The primary structure comprises 978 residues: Alanine--tRNA ligase, chloroplastic/mitochondrial (978 aa).

H655, H659, C758, and H762 together coordinate Zn(2+). Residue K773 forms a Glycyl lysine isopeptide (Lys-Gly) (interchain with G-Cter in ubiquitin) linkage.

This sequence belongs to the class-II aminoacyl-tRNA synthetase family. As to quaternary structure, monomer. Requires Zn(2+) as cofactor.

It localises to the plastid. The protein resides in the chloroplast. Its subcellular location is the mitochondrion. It carries out the reaction tRNA(Ala) + L-alanine + ATP = L-alanyl-tRNA(Ala) + AMP + diphosphate. Catalyzes the attachment of alanine to tRNA(Ala) in a two-step reaction: alanine is first activated by ATP to form Ala-AMP and then transferred to the acceptor end of tRNA(Ala). Also edits incorrectly charged tRNA(Ala) via its editing domain. The sequence is that of Alanine--tRNA ligase, chloroplastic/mitochondrial (EMB86) from Arabidopsis thaliana (Mouse-ear cress).